Reading from the N-terminus, the 150-residue chain is Large ribosomal subunit protein bL9 (150 aa).

This sequence belongs to the bacterial ribosomal protein bL9 family.

Binds to the 23S rRNA. This chain is Large ribosomal subunit protein bL9, found in Corynebacterium glutamicum (strain ATCC 13032 / DSM 20300 / JCM 1318 / BCRC 11384 / CCUG 27702 / LMG 3730 / NBRC 12168 / NCIMB 10025 / NRRL B-2784 / 534).